We begin with the raw amino-acid sequence, 1450 residues long: Actin cytoskeleton-regulatory complex protein PAN1 (1450 aa).

Positions methionine 1–threonine 140 are disordered. 2 stretches are compositionally biased toward low complexity: residues glycine 15–aspartate 37 and proline 59–glutamine 71. Residues phenylalanine 72–methionine 83 are compositionally biased toward polar residues. The segment covering isoleucine 93 to alanine 119 has biased composition (low complexity). The span at alanine 120–lysine 136 shows a compositional bias: pro residues. 2 EH domains span residues aspartate 181–methionine 270 and glutamate 444–asparagine 533. 2 consecutive EF-hand domains span residues leucine 214–lysine 249 and leucine 477–lysine 512. 3 disordered regions span residues arginine 600–glutamate 625, serine 788–alanine 851, and leucine 865–aspartate 1450. Residues serine 622–alanine 741 adopt a coiled-coil conformation. Residues serine 788 to aspartate 850 show a composition bias toward basic and acidic residues. Residues serine 902 to serine 924 show a composition bias toward low complexity. Residues glutamate 960–serine 1148 are a coiled coil. 3 stretches are compositionally biased toward basic and acidic residues: residues arginine 965–glutamate 997, alanine 1026–lysine 1101, and glutamate 1110–glutamate 1140. Over residues alanine 1141–proline 1153 the composition is skewed to acidic residues. Polar residues predominate over residues isoleucine 1156–histidine 1169. 2 stretches are compositionally biased toward pro residues: residues glutamine 1178–serine 1188 and alanine 1222–proline 1239. Over residues arginine 1265 to aspartate 1275 the composition is skewed to basic and acidic residues. The span at lysine 1276–aspartate 1285 shows a compositional bias: acidic residues. Residues glycine 1314–valine 1323 are compositionally biased toward polar residues. 3 stretches are compositionally biased toward pro residues: residues valine 1327–glycine 1352, proline 1361–proline 1375, and proline 1381–alanine 1411. One can recognise a WH2 domain in the interval arginine 1417–threonine 1434.

Belongs to the PAN1 family. Component of the PAN1 actin cytoskeleton-regulatory complex.

It is found in the cell membrane. It localises to the endosome membrane. The protein localises to the cytoplasm. The protein resides in the cytoskeleton. Its subcellular location is the actin patch. Its function is as follows. Component of the PAN1 actin cytoskeleton-regulatory complex required for the internalization of endosomes during actin-coupled endocytosis. The complex links the site of endocytosis to the cell membrane-associated actin cytoskeleton. Mediates uptake of external molecules and vacuolar degradation of plasma membrane proteins. Plays a role in the proper organization of the cell membrane-associated actin cytoskeleton and promotes its destabilization. The sequence is that of Actin cytoskeleton-regulatory complex protein PAN1 (PAN1) from Chaetomium globosum (strain ATCC 6205 / CBS 148.51 / DSM 1962 / NBRC 6347 / NRRL 1970) (Soil fungus).